A 356-amino-acid polypeptide reads, in one-letter code: Cyclin-dependent kinase 5 activator 1 (356 aa).

Disordered regions lie at residues 1–53 and 66–99; these read MGAN…AKES and IQPV…FTRN. Composition is skewed to low complexity over residues 40–49 and 71–92; these read SNTSSRSSSN and SRRS…SSDS.

It belongs to the cyclin-dependent kinase 5 activator family. In terms of assembly, heterodimer composed of a catalytic subunit cdk-5 and a regulatory subunit cdka-1. Interaction with cdka-1 is required for cdk-5 activation. As to expression, expressed in all classes of neurons in the ventral cord.

It is found in the cytoplasm. It localises to the cell projection. The protein localises to the dendrite. The protein resides in the axon. Activator of the kinase cdk-5. In several motor neurons, promotes the polarized trafficking of synaptic vesicles and dense-core vesicles. In the ventral nerve cord, regulates the synaptic localization of the glutamate receptor, glr-1. In DA motor neurons, regulates axonal transport of synaptic vesicle precursors by inhibiting dynein-mediated retrograde transport. Regulates the polarized distribution of dense-core vesicles in DB motor neurons. May regulate these processes in association with cdk-5. May also play a role in GABAergic synaptic vesicle localization in the ventral nerve cord. The polypeptide is Cyclin-dependent kinase 5 activator 1 (Caenorhabditis elegans).